Here is a 235-residue protein sequence, read N- to C-terminus: MRPLAGGLLKVVFVVFASLCAWYSGYLLAELIPDAPLSSAAYSIRSIGERPVLKAPVPKRQKCDHWTPCPSDTYAYRLLSGGGRSKYAKICFEDNLLMGEQLGNVARGINIAIVNYVTGNVTATRCFDMYEGDNSGPMTKFIQSAAPKSLLFMVTYDDGSTRLNNDAKNAIEALGSKEIRNMKFRSSWVFIAAKGLELPSEIQREKINHSDAKNNRYSGWPAEIQIEGCIPKERS.

Positions 1–29 (MRPLAGGLLKVVFVVFASLCAWYSGYLLA) are cleaved as a signal peptide. Disulfide bonds link Cys-63/Cys-91 and Cys-69/Cys-229. The 162-residue stretch at 72-233 (DTYAYRLLSG…IQIEGCIPKE (162 aa)) folds into the GG-type lectin domain. Asn-120 and Asn-208 each carry an N-linked (GlcNAc...) asparagine glycan.

Belongs to the FAM3 family. In terms of processing, 2 N-termini have been observed in the mature protein: the first at Glu-30, resulting from signal peptide cleavage, the second at Ser-46. Post-translationally, O-glycosylated. Highly expressed in the pancreas. Also found in the colon, kidney, prostate, small intestine and testis.

It is found in the secreted. In terms of biological role, induces apoptosis of alpha and beta cells in a dose- and time-dependent manner. The sequence is that of Protein FAM3B (FAM3B) from Homo sapiens (Human).